A 515-amino-acid chain; its full sequence is Maturase K (515 aa).

This sequence belongs to the intron maturase 2 family. MatK subfamily.

Its subcellular location is the plastid. The protein resides in the chloroplast. In terms of biological role, usually encoded in the trnK tRNA gene intron. Probably assists in splicing its own and other chloroplast group II introns. The chain is Maturase K from Pinus coulteri (Coulter pine).